Here is a 106-residue protein sequence, read N- to C-terminus: Nucleoid-associated protein RPD_0086 (106 aa).

This sequence belongs to the YbaB/EbfC family. Homodimer.

It localises to the cytoplasm. The protein localises to the nucleoid. Its function is as follows. Binds to DNA and alters its conformation. May be involved in regulation of gene expression, nucleoid organization and DNA protection. In Rhodopseudomonas palustris (strain BisB5), this protein is Nucleoid-associated protein RPD_0086.